A 98-amino-acid chain; its full sequence is Alpha-defensin 1 (98 aa).

The first 19 residues, 1–19, serve as a signal peptide directing secretion; the sequence is MRTLTLLTALLLLALQVQT. A propeptide spanning residues 20–63 is cleaved from the precursor; that stretch reads QSLEETADQVPAQDQPGAEAQDITISFAGDERSAREASKSLIGT. Disulfide bonds link C66–C96, C68–C84, and C74–C95.

The protein belongs to the alpha-defensin family. As to expression, paneth cells of the small bowel.

The protein localises to the secreted. In terms of biological role, has broad-spectrum antimicrobial properties. The antimicrobial activity decreases in the present of salt in vitro. Binds anionic phospholipids, which leads to the aggregation of liposomes in vitro. Membrane permeabilization of the target cells is an essential part of the peptide's mode of antimicrobial activity. No hemolytic activity against sheep or horse erythrocytes. Has antibacterial activity against the bacterial horse pathogens Gram-positive R.equi ATCC 33701 P(-) (minimum bactericidal concentration or MBC=5 ug/ml) and R.equi ATCC 33701 P(+) (MBC=5 ug/ml), which are resistant against beta-lactam antibiotics. Also has antibacterial activity against highly infectious wild-type strain R.equi 85F P(+) (MBC=5 ug/ml), S.equi subsp. equi (MBC=5 ug/ml), S.equi subsp. zooepidemicus (MBC=5 ug/ml), S.dysgalactiae subsp. equisimilis (MBC=10 ug/ml), S.choleraesuis subsp. choleraesuis serovar Typhimurium (MBC=10 ug/ml), and P.multocida subsp. multocida (MBC=&gt;10 ug/ml). Probably contributes to the antimicrobial barrier function of the small bowel mucosa. This Equus caballus (Horse) protein is Alpha-defensin 1.